The chain runs to 106 residues: Large ribosomal subunit protein uL24 (106 aa).

This sequence belongs to the universal ribosomal protein uL24 family. Part of the 50S ribosomal subunit.

In terms of biological role, one of two assembly initiator proteins, it binds directly to the 5'-end of the 23S rRNA, where it nucleates assembly of the 50S subunit. Functionally, one of the proteins that surrounds the polypeptide exit tunnel on the outside of the subunit. This Bordetella bronchiseptica (strain ATCC BAA-588 / NCTC 13252 / RB50) (Alcaligenes bronchisepticus) protein is Large ribosomal subunit protein uL24.